The sequence spans 300 residues: Porphobilinogen deaminase (300 aa).

At cysteine 239 the chain carries S-(dipyrrolylmethanemethyl)cysteine.

This sequence belongs to the HMBS family. In terms of assembly, monomer. Dipyrromethane serves as cofactor.

It carries out the reaction 4 porphobilinogen + H2O = hydroxymethylbilane + 4 NH4(+). It functions in the pathway porphyrin-containing compound metabolism; protoporphyrin-IX biosynthesis; coproporphyrinogen-III from 5-aminolevulinate: step 2/4. Its function is as follows. Tetrapolymerization of the monopyrrole PBG into the hydroxymethylbilane pre-uroporphyrinogen in several discrete steps. This Francisella tularensis subsp. novicida (strain U112) protein is Porphobilinogen deaminase.